Consider the following 169-residue polypeptide: Nucleoside diphosphate kinase 3 (169 aa).

ADP contacts are provided by Lys-29, Arg-105, Thr-111, Arg-122, Val-129, and Asn-132. His-135 (pros-phosphohistidine intermediate) is an active-site residue.

It belongs to the NDK family. In terms of assembly, homohexamer. Interacts (via its N-terminal region) with KAT5; this interaction enables recruitment of NME3 at DNA damage sites where it plays a role in the repair of DNA. Found in association with several ciliary nephronophthisis proteins, including NEK8, CEP164, ANKS6. Mg(2+) serves as cofactor.

Its subcellular location is the mitochondrion outer membrane. It is found in the cytoplasm. The protein resides in the cytoskeleton. The protein localises to the cilium basal body. It carries out the reaction a 2'-deoxyribonucleoside 5'-diphosphate + ATP = a 2'-deoxyribonucleoside 5'-triphosphate + ADP. It catalyses the reaction a ribonucleoside 5'-diphosphate + ATP = a ribonucleoside 5'-triphosphate + ADP. Its function is as follows. Catalyzes the phosphorylation of ribonucleosides and deoxyribonucleoside diphosphates, other than ATP, into the corresponding triphosphates with ATP as the major phosphate donor. The ATP gamma phosphate is transferred to the nucleoside diphosphate beta phosphate via a ping-pong mechanism, using a phosphorylated active-site intermediate. Through the catalyzed exchange of gamma-phosphate between di- and triphosphonucleosides participates in regulation of intracellular nucleotide homeostasis. Inhibits granulocyte differentiation. May be required for ciliary function during renal development. Functionally, independently of its kinase activity, facilitates mitochondrial tethering prior to membrane fusion through its direct membrane-binding and hexamerization. Implicated in repair of both single- and double-stranded breaks in DNA through its association with the ribonucleotide reductase complex (RNR complex) via its interaction with the histone acetyltransferase KAT5, this interaction enables recruitment of NME3 at DNA damage sites where it plays a role in the repair of DNA, independently of its kinase activity. The sequence is that of Nucleoside diphosphate kinase 3 from Homo sapiens (Human).